We begin with the raw amino-acid sequence, 135 residues long: Fatty acid-binding protein homolog 6 (135 aa).

A fatty acid-binding positions include Arg110 and 130–132 (REY).

The protein belongs to the calycin superfamily. Fatty-acid binding protein (FABP) family.

The polypeptide is Fatty acid-binding protein homolog 6 (lbp-6) (Caenorhabditis elegans).